We begin with the raw amino-acid sequence, 179 residues long: Large ribosomal subunit protein uL5 (179 aa).

The protein belongs to the universal ribosomal protein uL5 family. As to quaternary structure, part of the 50S ribosomal subunit; part of the 5S rRNA/L5/L18/L25 subcomplex. Contacts the 5S rRNA and the P site tRNA. Forms a bridge to the 30S subunit in the 70S ribosome.

This is one of the proteins that bind and probably mediate the attachment of the 5S RNA into the large ribosomal subunit, where it forms part of the central protuberance. In the 70S ribosome it contacts protein S13 of the 30S subunit (bridge B1b), connecting the 2 subunits; this bridge is implicated in subunit movement. Contacts the P site tRNA; the 5S rRNA and some of its associated proteins might help stabilize positioning of ribosome-bound tRNAs. In Macrococcus caseolyticus (strain JCSC5402) (Macrococcoides caseolyticum), this protein is Large ribosomal subunit protein uL5.